Consider the following 69-residue polypeptide: MANNNSGNSNNLLVPGAAQAIDQMKLEIASEFGVNLGADTTSRANGSVGGEITKRLVSFAQQNMGGGQF.

It belongs to the alpha/beta-type SASP family.

Its function is as follows. SASP are bound to spore DNA. They are double-stranded DNA-binding proteins that cause DNA to change to an a-like conformation. They protect the DNA backbone from chemical and enzymatic cleavage and are thus involved in dormant spore's high resistance to UV light. The polypeptide is Small, acid-soluble spore protein A (sspA) (Bacillus subtilis (strain 168)).